The primary structure comprises 482 residues: Serine decarboxylase 1 (482 aa).

Positions 36 to 55 (EVESPPRPAEEEGEGSPTRR) are disordered. A substrate-binding site is contributed by His200. Residue Lys312 is modified to N6-(pyridoxal phosphate)lysine.

Belongs to the group II decarboxylase family. It depends on pyridoxal 5'-phosphate as a cofactor.

The enzyme catalyses L-serine + H(+) = ethanolamine + CO2. Catalyzes the biosynthesis of ethanolamine from serine. Decarboxylation of free serine is the major source of ethanolamine production in plants and ethanolamine metabolism is crucial for the synthesis of choline, phosphatidylethanolamine (PE) and phosphatidylcholine (PC), and thus for plant growth. This is Serine decarboxylase 1 (SDC1) from Oryza sativa subsp. japonica (Rice).